The sequence spans 572 residues: Proline--tRNA ligase (572 aa).

Belongs to the class-II aminoacyl-tRNA synthetase family. ProS type 1 subfamily. As to quaternary structure, homodimer.

Its subcellular location is the cytoplasm. The catalysed reaction is tRNA(Pro) + L-proline + ATP = L-prolyl-tRNA(Pro) + AMP + diphosphate. Functionally, catalyzes the attachment of proline to tRNA(Pro) in a two-step reaction: proline is first activated by ATP to form Pro-AMP and then transferred to the acceptor end of tRNA(Pro). As ProRS can inadvertently accommodate and process non-cognate amino acids such as alanine and cysteine, to avoid such errors it has two additional distinct editing activities against alanine. One activity is designated as 'pretransfer' editing and involves the tRNA(Pro)-independent hydrolysis of activated Ala-AMP. The other activity is designated 'posttransfer' editing and involves deacylation of mischarged Ala-tRNA(Pro). The misacylated Cys-tRNA(Pro) is not edited by ProRS. This chain is Proline--tRNA ligase, found in Hydrogenovibrio crunogenus (strain DSM 25203 / XCL-2) (Thiomicrospira crunogena).